The primary structure comprises 181 residues: Ribosome maturation factor RimM (181 aa).

In terms of domain architecture, PRC barrel spans 98-172; the sequence is EDEFYFEDLI…RIVIPELSLW (75 aa).

The protein belongs to the RimM family. In terms of assembly, binds ribosomal protein uS19.

It localises to the cytoplasm. Functionally, an accessory protein needed during the final step in the assembly of 30S ribosomal subunit, possibly for assembly of the head region. Essential for efficient processing of 16S rRNA. May be needed both before and after RbfA during the maturation of 16S rRNA. It has affinity for free ribosomal 30S subunits but not for 70S ribosomes. This is Ribosome maturation factor RimM from Hyphomonas neptunium (strain ATCC 15444).